The following is a 123-amino-acid chain: Small ribosomal subunit protein uS12 (123 aa).

Residue D89 is modified to 3-methylthioaspartic acid.

It belongs to the universal ribosomal protein uS12 family. Part of the 30S ribosomal subunit. Contacts proteins S8 and S17. May interact with IF1 in the 30S initiation complex.

With S4 and S5 plays an important role in translational accuracy. Its function is as follows. Interacts with and stabilizes bases of the 16S rRNA that are involved in tRNA selection in the A site and with the mRNA backbone. Located at the interface of the 30S and 50S subunits, it traverses the body of the 30S subunit contacting proteins on the other side and probably holding the rRNA structure together. The combined cluster of proteins S8, S12 and S17 appears to hold together the shoulder and platform of the 30S subunit. This chain is Small ribosomal subunit protein uS12, found in Myxococcus xanthus.